We begin with the raw amino-acid sequence, 171 residues long: MAIREIISIPDKRLRRVSEPVEKITSEVRALAEDMFETMYDAPGIGLAAIQVAVPLRLITMDLAKKEGESAPRVFINPEILSKSEDIAVYEEGCLSIPEYYEEVERPASVRVRFMDLEGEVHEEDAEGLFATCIQHEIDHLNGVLFIDYLSKLKRDRVMKKFTKAAKLAAK.

Cys94 and His136 together coordinate Fe cation. Glu137 is an active-site residue. His140 contributes to the Fe cation binding site.

The protein belongs to the polypeptide deformylase family. The cofactor is Fe(2+).

The catalysed reaction is N-terminal N-formyl-L-methionyl-[peptide] + H2O = N-terminal L-methionyl-[peptide] + formate. Removes the formyl group from the N-terminal Met of newly synthesized proteins. Requires at least a dipeptide for an efficient rate of reaction. N-terminal L-methionine is a prerequisite for activity but the enzyme has broad specificity at other positions. This Afipia carboxidovorans (strain ATCC 49405 / DSM 1227 / KCTC 32145 / OM5) (Oligotropha carboxidovorans) protein is Peptide deformylase.